A 373-amino-acid chain; its full sequence is Cytoplasmic tRNA 2-thiolation protein 1 (373 aa).

The protein belongs to the TtcA family. CTU1/NCS6/ATPBD3 subfamily.

The protein localises to the cytoplasm. Its pathway is tRNA modification; 5-methoxycarbonylmethyl-2-thiouridine-tRNA biosynthesis. Its function is as follows. Plays a central role in 2-thiolation of mcm(5)S(2)U at tRNA wobble positions of tRNA(Lys), tRNA(Glu) and tRNA(Gln). Directly binds tRNAs and probably acts by catalyzing adenylation of tRNAs, an intermediate required for 2-thiolation. It is unclear whether it acts as a sulfurtransferase that transfers sulfur from thiocarboxylated URM1 onto the uridine of tRNAs at wobble position. The chain is Cytoplasmic tRNA 2-thiolation protein 1 from Caenorhabditis elegans.